The primary structure comprises 1321 residues: Adhesion G protein-coupled receptor A3 (1321 aa).

The N-terminal stretch at 1–33 is a signal peptide; that stretch reads MEPPGRRRGRAQPPLLLPLSLLALLALLGGGGG. The Extracellular segment spans residues 34–761; it reads GGAAALPAGC…YTQAASLLHP (728 aa). N-linked (GlcNAc...) asparagine glycosylation is found at N81 and N98. LRR repeat units follow at residues 82 to 103, 106 to 127, 130 to 151, and 154 to 175; these read RTVT…SFSG, LLER…AFWG, SLKR…IFRG, and NLVR…TFDY. N159, N206, N301, N332, N433, N453, and N592 each carry an N-linked (GlcNAc...) asparagine glycan. The LRRCT domain occupies 187 to 237; it reads EYLLCDCNILWMHRWVKEKNITVRDTRCVYPKSLQAQPVTGVKQELLTCDP. An Ig-like domain is found at 242–340; sequence PSFYMTPSHR…GNNTRTVDIV (99 aa). A disulfide bridge connects residues C264 and C324. In terms of domain architecture, GAIN-B spans 583-750; sequence LDKQLSFKCN…AVLMDLTGSE (168 aa). The LRR 5 repeat unit spans residues 594-620; sequence SNTFSSLALKNTIVEASIQLPPSLFSP. N-linked (GlcNAc...) asparagine glycosylation is found at N652, N687, and N728. Residues 701 to 750 are GPS; sequence AARWDFDLLNGQGGWKSDGCHILYSDENITTIQCYSLSNYAVLMDLTGSE. C720 and C734 are oxidised to a cystine. Residues 762–782 form a helical membrane-spanning segment; the sequence is VVYTTAIILLLCLLAVIVSYI. Topologically, residues 783–796 are cytoplasmic; sequence YHHSLIRISLKSWH. The helical transmembrane segment at 797–817 threads the bilayer; that stretch reads MLVNLCFHIFLTCVVFVGGIT. Residues 818-826 lie on the Extracellular side of the membrane; it reads QTRNASICQ. Residue N821 is glycosylated (N-linked (GlcNAc...) asparagine). The helical transmembrane segment at 827–847 threads the bilayer; sequence AVGIILHYSTLATVLWVGVTA. Residues 848 to 876 lie on the Cytoplasmic side of the membrane; that stretch reads RNIYKQVTKKAKRCQDPDEPPPPPRPMLR. Residues 877–897 form a helical membrane-spanning segment; the sequence is FYLIGGGIPIIVCGITAAANI. Topologically, residues 898–919 are extracellular; it reads KNYGSRPNAPYCWMAWEPSLGA. The chain crosses the membrane as a helical span at residues 920-940; it reads FYGPASFITFVNCMYFLSIFI. The Cytoplasmic segment spans residues 941–996; that stretch reads QLKRHPERKYELKEPTEEQQRLAANENGEINHQDSMSLSLISTSALENEHTFHSQL. Residues 997–1017 traverse the membrane as a helical segment; the sequence is LGASLTLLLYVALWMFGALAV. At 1018–1024 the chain is on the extracellular side; sequence SLYYPLD. Residues 1025-1045 form a helical membrane-spanning segment; the sequence is LVFSFVFGATSLSFSAFFVVH. Residues 1046-1321 are Cytoplasmic-facing; that stretch reads HCVNREDVRL…TGLWKHETTV (276 aa). A compositionally biased stretch (polar residues) spans 1073–1083; it reads NVQPPNSNGTN. Disordered stretches follow at residues 1073–1094, 1198–1219, 1231–1265, and 1294–1321; these read NVQP…NSSA, VEGS…GHSR, QYNP…KKDA, and SNGQ…ETTV. The segment covering 1233–1250 has biased composition (polar residues); sequence NPPQQDSSDACSTLPKSS. The PDZ-binding motif lies at 1319 to 1321; the sequence is TTV.

It belongs to the G-protein coupled receptor 2 family. Adhesion G-protein coupled receptor (ADGR) subfamily. Interacts (via PDZ-binding motif) with DLG1.

It localises to the membrane. Orphan receptor that may have a role in planar cell polarity pathway. This chain is Adhesion G protein-coupled receptor A3, found in Homo sapiens (Human).